The sequence spans 511 residues: Ectonucleoside triphosphate diphosphohydrolase 1 (511 aa).

Over 1–16 (MEDIKDSKVKRFCSKN) the chain is Cytoplasmic. The chain crosses the membrane as a helical span at residues 17–37 (ILIILGFSSVLAVIALIAVGL). Residues 38 to 478 (THNKPLPENV…LSPPLPHSTY (441 aa)) are Extracellular-facing. The segment at 46–171 (NVKYGIVLDA…DFQGAKIITG (126 aa)) is N-terminal lobe. N-linked (GlcNAc...) asparagine glycosylation occurs at N73. A disulfide bridge connects residues C84 and C108. The Proton acceptor role is filled by E174. The C-terminal lobe stretch occupies residues 205 to 441 (QATFGALDLG…GTSWDQIHFM (237 aa)). 3 N-linked (GlcNAc...) asparagine glycosylation sites follow: N226, N291, and N333. Disulfide bonds link C254–C300 and C281–C324. C337 and C342 are joined by a disulfide. A glycan (N-linked (GlcNAc...) asparagine) is linked at N374. C391 and C414 are disulfide-bonded. N429 and N458 each carry an N-linked (GlcNAc...) asparagine glycan. A helical membrane pass occupies residues 479–499 (ISLMVLFSLVLVAMVITGLFI). Over 500–511 (FSKPSYFWKEAV) the chain is Cytoplasmic.

This sequence belongs to the GDA1/CD39 NTPase family. In terms of assembly, homodimer; disulfide-linked. Requires Ca(2+) as cofactor. Mg(2+) is required as a cofactor. Post-translationally, N-glycosylated. The N-terminus is blocked. In terms of processing, palmitoylated on Cys-13; which is required for caveola targeting. In terms of tissue distribution, expressed in primary neurons and astrocytes, kidney, liver, muscle, thymus, lung and spleen.

The protein resides in the membrane. It is found in the caveola. It catalyses the reaction a ribonucleoside 5'-triphosphate + 2 H2O = a ribonucleoside 5'-phosphate + 2 phosphate + 2 H(+). It carries out the reaction a ribonucleoside 5'-triphosphate + H2O = a ribonucleoside 5'-diphosphate + phosphate + H(+). The enzyme catalyses a ribonucleoside 5'-diphosphate + H2O = a ribonucleoside 5'-phosphate + phosphate + H(+). The catalysed reaction is ATP + 2 H2O = AMP + 2 phosphate + 2 H(+). It catalyses the reaction ATP + H2O = ADP + phosphate + H(+). It carries out the reaction ADP + H2O = AMP + phosphate + H(+). The enzyme catalyses CTP + 2 H2O = CMP + 2 phosphate + 2 H(+). The catalysed reaction is CTP + H2O = CDP + phosphate + H(+). It catalyses the reaction CDP + H2O = CMP + phosphate + H(+). It carries out the reaction GTP + 2 H2O = GMP + 2 phosphate + 2 H(+). The enzyme catalyses GTP + H2O = GDP + phosphate + H(+). The catalysed reaction is GDP + H2O = GMP + phosphate + H(+). It catalyses the reaction ITP + 2 H2O = IMP + 2 phosphate + 2 H(+). It carries out the reaction ITP + H2O = IDP + phosphate + H(+). The enzyme catalyses IDP + H2O = IMP + phosphate + H(+). The catalysed reaction is UTP + 2 H2O = UMP + 2 phosphate + 2 H(+). It catalyses the reaction UTP + H2O = UDP + phosphate + H(+). It carries out the reaction UDP + H2O = UMP + phosphate + H(+). In terms of biological role, catalyzes the hydrolysis of both di- and triphosphate nucleotides (NDPs and NTPs) and hydrolyze NTPs to nucleotide monophosphates (NMPs) in two distinct successive phosphate-releasing steps, with NDPs as intermediates and participates in the regulation of extracellular levels of nucleotides. By hydrolyzing proinflammatory ATP and platelet-activating ADP to AMP, it blocks platelet aggregation and supports blood flow. In Rattus norvegicus (Rat), this protein is Ectonucleoside triphosphate diphosphohydrolase 1.